A 525-amino-acid chain; its full sequence is MKPHLKQWRQRMLFAIFVWGLLFLAIFIYFTNSNPAAPMPSSFSFLESRGLLPVQGKQRVIMGALQEPSLPRSLEPSKVLMDGHSASPFNSWPGDPQKGDQAQDGFDNGDEFFTSQVGRKSQSAFYPEEDNYFFVAGQPGLYHHRQGALGLPSPGESSWQSGPGQPKQEKLRHPRRGSLPEEAYDSDMLSTSMSRAFLYRLWKGTVSSKMLNPRLQKAMRYYMSFNKHGVRFSRRGRREARRTGPELLCEMRKRVRVRTLDGKEAPFSGLGWRPLVPGVPLSQLHPRGLRSCAVVMSAGAILNSSLGEEIDSHDAVLRFNSAPTRGYEKDVGNKTTVRIINSQILANPSHHFIDSSLYKDVILVAWDPAPYSANLNLWYKKPDYNLFTPYIQHRLKYPTQPFYILHPKFIWQLWDIIQENTREKIQPNPPSSGFIGILVMMSMCQEVHVYEYIPSVRQTELCHYHELYYDAACTLGAYHPLLYEKLLVQRLNTGTQADLHHKGKVVLPGFQTLRCPVTRPNNTNT.

Topologically, residues 1-11 are cytoplasmic; it reads MKPHLKQWRQR. Residues 12-32 traverse the membrane as a helical; Signal-anchor for type II membrane protein segment; the sequence is MLFAIFVWGLLFLAIFIYFTN. Topologically, residues 33 to 525 are lumenal; it reads SNPAAPMPSS…PVTRPNNTNT (493 aa). Disordered stretches follow at residues 85 to 107 and 145 to 183; these read SASPFNSWPGDPQKGDQAQDGFD and RQGALGLPSPGESSWQSGPGQPKQEKLRHPRRGSLPEEA. 3 cysteine pairs are disulfide-bonded: Cys249–Cys515, Cys292–Cys444, and Cys462–Cys473. Residues Asn303 and Asn333 are each glycosylated (N-linked (GlcNAc...) asparagine). An N-linked (GlcNAc...) asparagine glycan is attached at Asn521.

This sequence belongs to the glycosyltransferase 29 family.

The protein localises to the golgi apparatus. The protein resides in the golgi stack membrane. It carries out the reaction a beta-D-galactoside + CMP-N-acetyl-beta-neuraminate = an N-acetyl-alpha-neuraminyl-(2-&gt;6)-beta-D-galactosyl derivative + CMP + H(+). Functionally, transfers sialic acid from the donor of substrate CMP-sialic acid to galactose containing acceptor substrates. Has alpha-2,6-sialyltransferase activity toward oligosaccharides that have the Gal-beta-1,4-GlcNAc sequence at the non-reducing end of their carbohydrate groups, but it has weak or no activities toward glycoproteins and glycolipids. The chain is Beta-galactoside alpha-2,6-sialyltransferase 2 (St6gal2) from Rattus norvegicus (Rat).